The following is a 223-amino-acid chain: MKWLSKSWAVAVVLLVGCAGRQEFIPPQPNAEEYAPPKLDYTLPDAQSGSLYRHQYTMTLFQDRRAYRVGDVLTVVLSEETSSSKKAGTKFGKSSAVNFAAPTIGTKKFDELGVSIDGSRNFDGSASSSQGNKLQGAITVTVHDVLPNGVLRISGEKWLRLNQGDEFIRLTGIVRVDDITRNNQVSSQRIADARITYAGRGALADSNAAGWLTQFFNSPWVPF.

Positions 1 to 17 are cleaved as a signal peptide; that stretch reads MKWLSKSWAVAVVLLVG. Residue cysteine 18 is the site of N-palmitoyl cysteine attachment. Cysteine 18 is lipidated: S-diacylglycerol cysteine.

It belongs to the FlgH family. The basal body constitutes a major portion of the flagellar organelle and consists of four rings (L,P,S, and M) mounted on a central rod.

The protein resides in the cell outer membrane. It is found in the bacterial flagellum basal body. Assembles around the rod to form the L-ring and probably protects the motor/basal body from shearing forces during rotation. The chain is Flagellar L-ring protein 2 from Vibrio parahaemolyticus serotype O3:K6 (strain RIMD 2210633).